A 396-amino-acid chain; its full sequence is Elongation factor Tu (396 aa).

Residues 10-206 form the tr-type G domain; the sequence is KPHVNVGTIG…ALDTFIPEPT (197 aa). The interval 19–26 is G1; the sequence is GHVDHGKT. 19 to 26 is a binding site for GTP; the sequence is GHVDHGKT. Mg(2+) is bound at residue T26. The tract at residues 60–64 is G2; sequence GITIS. The segment at 81–84 is G3; sequence DCPG. GTP is bound by residues 81 to 85 and 136 to 139; these read DCPGH and NKAD. The tract at residues 136-139 is G4; it reads NKAD. Residues 174 to 176 form a G5 region; sequence SAR.

Belongs to the TRAFAC class translation factor GTPase superfamily. Classic translation factor GTPase family. EF-Tu/EF-1A subfamily. In terms of assembly, monomer.

It localises to the cytoplasm. It carries out the reaction GTP + H2O = GDP + phosphate + H(+). GTP hydrolase that promotes the GTP-dependent binding of aminoacyl-tRNA to the A-site of ribosomes during protein biosynthesis. In Xanthomonas oryzae pv. oryzae (strain MAFF 311018), this protein is Elongation factor Tu.